A 291-amino-acid polypeptide reads, in one-letter code: ATP synthase gamma chain (291 aa).

It belongs to the ATPase gamma chain family. As to quaternary structure, F-type ATPases have 2 components, CF(1) - the catalytic core - and CF(0) - the membrane proton channel. CF(1) has five subunits: alpha(3), beta(3), gamma(1), delta(1), epsilon(1). CF(0) has three main subunits: a, b and c.

Its subcellular location is the cell inner membrane. Produces ATP from ADP in the presence of a proton gradient across the membrane. The gamma chain is believed to be important in regulating ATPase activity and the flow of protons through the CF(0) complex. The chain is ATP synthase gamma chain from Neisseria meningitidis serogroup A / serotype 4A (strain DSM 15465 / Z2491).